The primary structure comprises 247 residues: Putative trypsin-6 (247 aa).

Positions 1-15 (MNPLLILAFVGAAVA) are cleaved as a signal peptide. The Peptidase S1 domain maps to 24 to 244 (IVGGYTCEEN…YVDWIKDTIA (221 aa)). Cys-48 and Cys-64 are disulfide-bonded. The active-site Charge relay system is His-63. Ca(2+) is bound by residues Glu-75, Asn-77, Val-80, and Glu-85. Residue Asp-107 is the Charge relay system of the active site. 3 disulfides stabilise this stretch: Cys-139–Cys-206, Cys-171–Cys-185, and Cys-196–Cys-220. The active-site Charge relay system is Ser-200.

It belongs to the peptidase S1 family. Tryptase subfamily. Overexpressed in metastasing in non small cell lung tumors, leading to an enhanced cell migration.

It localises to the secreted. The catalysed reaction is Preferential cleavage: Arg-|-Xaa, Lys-|-Xaa.. Its function is as follows. May regulate cell migration. The sequence is that of Putative trypsin-6 (PRSS3P2) from Homo sapiens (Human).